Here is a 509-residue protein sequence, read N- to C-terminus: Probable xyloglucan galactosyltransferase GT12 (509 aa).

Residues 1-3 (MMK) are Cytoplasmic-facing. The helical; Signal-anchor for type II membrane protein transmembrane segment at 4 to 24 (PVPKLWVVISSAFVFCLLVLF) threads the bilayer. The Lumenal segment spans residues 25–509 (QINKSDLIEA…KLEIIHEKTA (485 aa)). 8 N-linked (GlcNAc...) asparagine glycosylation sites follow: N27, N59, N65, N169, N170, N195, N257, and N416.

The protein belongs to the glycosyltransferase 47 family. As to expression, expressed in pollen grains.

The protein resides in the golgi apparatus membrane. In terms of biological role, functions in xyloglucan synthesis by adding side chains to the xylosylated glucan backbone. Involved in the galactosylation of hemicellulose xyloglucan. The polypeptide is Probable xyloglucan galactosyltransferase GT12 (Arabidopsis thaliana (Mouse-ear cress)).